A 648-amino-acid polypeptide reads, in one-letter code: Macrolide export ATP-binding/permease protein MacB (648 aa).

Residues 5–243 (LELKDIRRSY…TGGTEPVVNT (239 aa)) form the ABC transporter domain. 41–48 (GASGSGKS) is an ATP binding site. The next 4 membrane-spanning stretches (helical) occupy residues 273 to 293 (LLTM…VVVG), 523 to 543 (LFLT…VMNI), 576 to 596 (AVLV…LIAF), and 611 to 631 (PLAL…FGWL).

This sequence belongs to the ABC transporter superfamily. Macrolide exporter (TC 3.A.1.122) family. As to quaternary structure, homodimer. Part of the tripartite efflux system MacAB-TolC, which is composed of an inner membrane transporter, MacB, a periplasmic membrane fusion protein, MacA, and an outer membrane component, TolC. The complex forms a large protein conduit and can translocate molecules across both the inner and outer membranes. Interacts with MacA.

Its subcellular location is the cell inner membrane. Its function is as follows. Part of the tripartite efflux system MacAB-TolC. MacB is a non-canonical ABC transporter that contains transmembrane domains (TMD), which form a pore in the inner membrane, and an ATP-binding domain (NBD), which is responsible for energy generation. Confers resistance against macrolides. This is Macrolide export ATP-binding/permease protein MacB from Escherichia coli (strain UTI89 / UPEC).